Reading from the N-terminus, the 1097-residue chain is Cyclin-T (1097 aa).

Disordered stretches follow at residues 319-782 (SNIT…SNGI), 804-936 (LLKP…SLQA), and 985-1097 (AAPV…YNKK). The span at 332-350 (DSRDRDRDRERERERERDP) shows a compositional bias: basic and acidic residues. Low complexity-rich tracts occupy residues 373 to 390 (SSSV…SSSS), 420 to 456 (PSSH…GRPS), 467 to 478 (GMPPVGVGMPPH), and 489 to 511 (PQQP…SGMS). Polar residues predominate over residues 580 to 591 (LPYSQSQSYGHM). Over residues 592–606 (QQQPVPQSQQQQMPP) the composition is skewed to low complexity. The span at 609-620 (SQHSLQSKNSLF) shows a compositional bias: polar residues. Residues 652–675 (HDYKLNSHPRDKESPKKERLTPTK) are compositionally biased toward basic and acidic residues. Positions 687-698 (GSGNSSSGSGSS) are enriched in low complexity. Residues 860 to 870 (GEIKEESSSKS) are compositionally biased toward basic and acidic residues. The segment covering 871 to 883 (EKKKKKDKHKHKE) has biased composition (basic residues). The span at 884-895 (KDKSKDKTEKEE) shows a compositional bias: basic and acidic residues. Serine 916 carries the post-translational modification Phosphoserine. A compositionally biased stretch (gly residues) spans 993–1007 (GAGGGGYSSSGGSSS). The span at 1016-1031 (SDRDRDKESKKNKSQD) shows a compositional bias: basic and acidic residues. A compositionally biased stretch (gly residues) spans 1037–1050 (GAGGGIFNPLGGAG). The segment covering 1087–1097 (APPPMPVYNKK) has biased composition (pro residues).

It belongs to the cyclin family. Cyclin C subfamily. Component of the super elongation complex (SEC), at least composed of Ell, Cdk9, cyclin-T (CycT), lilli and ear. Associates with CDK9 to form P-TEFb.

It localises to the nucleus. Regulatory subunit of the cyclin-dependent kinase pair (CDK9/cyclin T) complex, also called positive transcription elongation factor B (P-TEFb), which is proposed to facilitate the transition from abortive to production elongation by phosphorylating the CTD (carboxy-terminal domain) of the large subunit of RNA polymerase II (RNAP II). This chain is Cyclin-T (CycT), found in Drosophila melanogaster (Fruit fly).